A 94-amino-acid polypeptide reads, in one-letter code: Integration host factor subunit beta (94 aa).

This sequence belongs to the bacterial histone-like protein family. In terms of assembly, heterodimer of an alpha and a beta chain.

Functionally, this protein is one of the two subunits of integration host factor, a specific DNA-binding protein that functions in genetic recombination as well as in transcriptional and translational control. In Vibrio campbellii (strain ATCC BAA-1116), this protein is Integration host factor subunit beta.